Here is a 707-residue protein sequence, read N- to C-terminus: Methionine--tRNA ligase (707 aa).

Positions 13-23 (PYANGNFHIGH) match the 'HIGH' region motif. Zn(2+)-binding residues include cysteine 147, cysteine 150, cysteine 160, and cysteine 163. The 'KMSKS' region motif lies at 344–348 (KMSKS). Residue lysine 347 participates in ATP binding. The 107-residue stretch at 601–707 (DFAKVDLRIA…PGATPGMRIH (107 aa)) folds into the tRNA-binding domain.

The protein belongs to the class-I aminoacyl-tRNA synthetase family. MetG type 1 subfamily. As to quaternary structure, homodimer. Requires Zn(2+) as cofactor.

It localises to the cytoplasm. The catalysed reaction is tRNA(Met) + L-methionine + ATP = L-methionyl-tRNA(Met) + AMP + diphosphate. Its function is as follows. Is required not only for elongation of protein synthesis but also for the initiation of all mRNA translation through initiator tRNA(fMet) aminoacylation. The sequence is that of Methionine--tRNA ligase from Polaromonas naphthalenivorans (strain CJ2).